Consider the following 369-residue polypeptide: UPF0283 membrane protein RPA1583 (369 aa).

Positions 1-61 (MTERVPPRRP…APPPPPPRAR (61 aa)) are disordered. Over residues 34 to 51 (AKPSAKADARPAASAAGA) the composition is skewed to low complexity. Transmembrane regions (helical) follow at residues 90–110 (WGTV…WLWI), 124–144 (LGTI…IIIG), and 239–259 (VSLV…VAIA).

It belongs to the UPF0283 family.

It is found in the cell inner membrane. The polypeptide is UPF0283 membrane protein RPA1583 (Rhodopseudomonas palustris (strain ATCC BAA-98 / CGA009)).